A 695-amino-acid polypeptide reads, in one-letter code: Threonine--tRNA ligase (695 aa).

In terms of domain architecture, TGS spans 1–76; it reads MPRIPSPPQA…TTTDVVEPVT (76 aa). The catalytic stretch occupies residues 279–585; the sequence is DHRKLGVELD…LLEHHAGAFP (307 aa). Zn(2+) contacts are provided by Cys384, His435, and His562.

This sequence belongs to the class-II aminoacyl-tRNA synthetase family. As to quaternary structure, homodimer. Requires Zn(2+) as cofactor.

The protein resides in the cytoplasm. It catalyses the reaction tRNA(Thr) + L-threonine + ATP = L-threonyl-tRNA(Thr) + AMP + diphosphate + H(+). Functionally, catalyzes the attachment of threonine to tRNA(Thr) in a two-step reaction: L-threonine is first activated by ATP to form Thr-AMP and then transferred to the acceptor end of tRNA(Thr). Also edits incorrectly charged L-seryl-tRNA(Thr). The chain is Threonine--tRNA ligase from Leifsonia xyli subsp. xyli (strain CTCB07).